Consider the following 362-residue polypeptide: Heat-inducible transcription repressor HrcA (362 aa).

It belongs to the HrcA family.

Negative regulator of class I heat shock genes (grpE-dnaK-dnaJ and groELS operons). Prevents heat-shock induction of these operons. This is Heat-inducible transcription repressor HrcA from Nitrobacter winogradskyi (strain ATCC 25391 / DSM 10237 / CIP 104748 / NCIMB 11846 / Nb-255).